An 817-amino-acid polypeptide reads, in one-letter code: MHKHQHCCKCPECYEVTRLAALRRLEPPGYGDWQVPDPYGPGGGNGASAGYGGYSSQTLPSQAGATPTPRTKAKLIPTGRDVGPVPPKPVPGKSTPKLNGSGPSWWPECTCTNRDWYEQVNGSDGMFKYEEIVLERGNSGLGFSIAGGIDNPHVPDDPGIFITKIIPGGAAAMDGRLGVNDCVLRVNEVDVSEVVHSRAVEALKEAGPVVRLVVRRRQPPPETIMEVNLLKGPKGLGFSIAGGIGNQHIPGDNSIYITKIIEGGAAQKDGRLQIGDRLLAVNNTNLQDVRHEEAVASLKNTSDMVYLKVAKPGSLHLNDMYAPPDYASTFTALADNHISHNSSLGYLGAVESKVSYPAPPQVPPTRYSPIPRHMLAEEDFTREPRKIILHKGSTGLGFNIVGGEDGEGIFVSFILAGGPADLSGELRRGDRILSVNGVNLRNATHEQAAAALKRAGQSVTIVAQYRPEEYSRFESKIHDLREQMMNSSMSSGSGSLRTSEKRSLYVRALFDYDRTRDSCLPSQGLSFSYGDILHVINASDDEWWQARLVTPHGESEQIGVIPSKKRVEKKERARLKTVKFHARTGMIESNRDFPGLSDDYYGAKNLKGQEDAILSYEPVTRQEIHYARPVIILGPMKDRVNDDLISEFPHKFGSCVPHTTRPRRDNEVDGQDYHFVVSREQMEKDIQDNKFIEAGQFNDNLYGTSIQSVRAVAERGKHCILDVSGNAIKRLQQAQLYPIAIFIKPKSIEALMEMNRRQTYEQANKIYDKAMKLEQEFGEYFTAIVQGDSLEEIYNKIKQIIEDQSGHYIWVPSPEKL.

N-acetylmethionine is present on residues methionine 1 and histidine 2. Positions 33–101 (WQVPDPYGPG…GKSTPKLNGS (69 aa)) are disordered. A compositionally biased stretch (gly residues) spans 40-53 (GPGGGNGASAGYGG). Over residues 57-69 (QTLPSQAGATPTP) the composition is skewed to polar residues. PDZ domains lie at 130–217 (EEIV…VRRR), 226–311 (EVNL…KVAK), and 379–465 (DFTR…VAQY). Serine 139 is subject to Phosphoserine. The SH3 domain occupies 501–571 (KRSLYVRALF…PSKKRVEKKE (71 aa)). The Guanylate kinase-like domain maps to 627 to 802 (ARPVIILGPM…IYNKIKQIIE (176 aa)). Residue tyrosine 673 is modified to Phosphotyrosine.

Belongs to the MAGUK family. In terms of assembly, interacts through its PDZ domains with NETO1, GRIN2B and SYNGAP1. Interacts through its guanylate kinase-like domain with DLGAP1, DLGAP2, DLGAP3 and DLGAP4. Interacts with FLTP/C1orf192. Interacts through its PDZ domains with APC. Interacts through its first two PDZ domains with ERBB4. Interacts through its third PDZ domain with NLGN1, and probably with NLGN2 and NLGN3. Interacts with FRMPD4 (via C-terminus). Interacts with LRFN1, LRFN2 and LRFN4. Interacts with DGKI (via PDZ-binding motif).

Functionally, required for learning most likely through its role in synaptic plasticity following NMDA receptor signaling. The chain is Disks large homolog 3 (DLG3) from Homo sapiens (Human).